We begin with the raw amino-acid sequence, 259 residues long: Snake venom serine protease homolog rhinocerase 3 (259 aa).

Residues 1–17 (VLIRVLANLLLLQLSYA) form the signal peptide. The propeptide occupies 18-23 (QESSEL). Residues 24–250 (VIGGDECDIN…YTDWIEGIIA (227 aa)) enclose the Peptidase S1 domain. 6 disulfide bridges follow: cysteine 30/cysteine 164, cysteine 51/cysteine 67, cysteine 99/cysteine 257, cysteine 143/cysteine 211, cysteine 175/cysteine 190, and cysteine 201/cysteine 226. Asparagine 80 carries N-linked (GlcNAc...) asparagine glycosylation. N-linked (GlcNAc...) asparagine glycosylation occurs at asparagine 252.

The protein belongs to the peptidase S1 family. Snake venom subfamily. Expressed by the venom gland.

Its subcellular location is the secreted. Functionally, snake venom serine protease homolog that may act in the hemostasis system of the prey. The protein is Snake venom serine protease homolog rhinocerase 3 of Bitis rhinoceros (West African gaboon viper).